We begin with the raw amino-acid sequence, 513 residues long: MTRVINLDGESLTIEDVIAIARQGVACRIDDSAIEAVNASRKIVDDIVSEKRVVYGVTTGFGSLCNVSISPEDTVQLQENLIRTHASGFGDPLPEDAVRAIMLIRINSLVKGYSGIRLSTIEKLLELLNKGVHPYIPEKGSLGASGDLAPLAHMVLPMLGLGKAYYKGELLSGQEALDKAGIDKISLAAKEGLALINGTTVLTAIGALATYDAIQLLKLSDLAGALSLEVHNGITSPFEENLHTIRPQSGQLATARNIRNLLEGSQNTTVATQSRVQDPYTLRCLPQIHGASKDSIAYVKSKVDIEINSVTDNPIICKDGHVISGGNFHGEPMAQPFDFLGIAISEIGNVSERRVERLVNSQLSKLPSFLVKYPGLNSGFMITQYACASLASENKVLAHPASVDSIPSCENQEDFVSMGTTAARKAFEILKNSRRIVATEIMAACQALDLKPENHELGKGTKVAYDLFRKEVNFIEHDKHIEIYDELNKASAVIEDPSFLEAVEQAVELSIQF.

A cross-link (5-imidazolinone (Ala-Gly)) is located at residues 144–146 (ASG). Ser145 bears the 2,3-didehydroalanine (Ser) mark.

The protein belongs to the PAL/histidase family. In terms of processing, contains an active site 4-methylidene-imidazol-5-one (MIO), which is formed autocatalytically by cyclization and dehydration of residues Ala-Ser-Gly.

It localises to the cytoplasm. The enzyme catalyses L-histidine = trans-urocanate + NH4(+). It participates in amino-acid degradation; L-histidine degradation into L-glutamate; N-formimidoyl-L-glutamate from L-histidine: step 1/3. The protein is Histidine ammonia-lyase of Streptococcus pyogenes serotype M6 (strain ATCC BAA-946 / MGAS10394).